A 162-amino-acid polypeptide reads, in one-letter code: METFPAAWVLALLCLGSHLLQAVISTTVIPSCIPEESEDNCTALVQMEDDPRVAQVLITKCSSDMDGYCLHGHCIYLVDMSEKYCRCEVGYTGLRCEHFFLTVHQPLSREYVALTVILVFLFLIVTAGSMYYFCRWYRNRKSKKSREEYERVTSGGPGLPQV.

The first 22 residues, 1 to 22, serve as a signal peptide directing secretion; it reads METFPAAWVLALLCLGSHLLQA. A propeptide spanning residues 23 to 55 is cleaved from the precursor; sequence VISTTVIPSCIPEESEDNCTALVQMEDDPRVAQ. N-linked (GlcNAc...) asparagine glycosylation occurs at Asn40. Positions 57–97 constitute an EGF-like domain; that stretch reads LITKCSSDMDGYCLHGHCIYLVDMSEKYCRCEVGYTGLRCE. Intrachain disulfides connect Cys61/Cys74, Cys69/Cys85, and Cys87/Cys96. A propeptide spans 102 to 162 (removed in mature form); sequence TVHQPLSREY…TSGGPGLPQV (61 aa). The chain crosses the membrane as a helical span at residues 113 to 133; sequence ALTVILVFLFLIVTAGSMYYF.

In terms of assembly, interacts with EGFR and ERBB4.

It is found in the secreted. It localises to the extracellular space. The protein resides in the cell membrane. Ligand of the EGF receptor/EGFR and ERBB4. Stimulates EGFR and ERBB4 tyrosine phosphorylation. Contributes to inflammation, wound healing, tissue repair, and oocyte maturation by regulating angiogenesis and vascular remodeling and by stimulating cell proliferation. The sequence is that of Proepiregulin (Ereg) from Rattus norvegicus (Rat).